The following is a 355-amino-acid chain: uncharacterized protein (355 aa).

Belongs to the TmcAL family.

This is an uncharacterized protein from Methanocaldococcus jannaschii (strain ATCC 43067 / DSM 2661 / JAL-1 / JCM 10045 / NBRC 100440) (Methanococcus jannaschii).